The following is a 414-amino-acid chain: Gamma-glutamyl phosphate reductase (414 aa).

Belongs to the gamma-glutamyl phosphate reductase family.

Its subcellular location is the cytoplasm. It carries out the reaction L-glutamate 5-semialdehyde + phosphate + NADP(+) = L-glutamyl 5-phosphate + NADPH + H(+). Its pathway is amino-acid biosynthesis; L-proline biosynthesis; L-glutamate 5-semialdehyde from L-glutamate: step 2/2. In terms of biological role, catalyzes the NADPH-dependent reduction of L-glutamate 5-phosphate into L-glutamate 5-semialdehyde and phosphate. The product spontaneously undergoes cyclization to form 1-pyrroline-5-carboxylate. The chain is Gamma-glutamyl phosphate reductase from Clostridium botulinum (strain Alaska E43 / Type E3).